The following is an 87-amino-acid chain: Toxin Cll3 (87 aa).

An N-terminal signal peptide occupies residues 1–19 (MNSLLMITACLAVIGTVWA). The 66-residue stretch at 20 to 85 (KEGYIVNYYD…VWPLPNKTCY (66 aa)) folds into the LCN-type CS-alpha/beta domain. 4 disulfide bridges follow: Cys-31-Cys-84, Cys-35-Cys-60, Cys-44-Cys-65, and Cys-48-Cys-67. Tyr-85 is subject to Tyrosine amide.

Belongs to the long (4 C-C) scorpion toxin superfamily. Sodium channel inhibitor family. Beta subfamily. In terms of tissue distribution, expressed by the venom gland.

The protein resides in the secreted. Its function is as follows. Beta toxins bind voltage-independently at site-4 of sodium channels (Nav) and shift the voltage of activation toward more negative potentials thereby affecting sodium channel activation and promoting spontaneous and repetitive firing. In Centruroides limpidus (Mexican scorpion), this protein is Toxin Cll3.